Reading from the N-terminus, the 505-residue chain is Glycerol kinase 1 (505 aa).

Thr13 is an ADP binding site. Thr13, Thr14, and Ser15 together coordinate ATP. Position 13 (Thr13) interacts with sn-glycerol 3-phosphate. Arg17 is a binding site for ADP. Arg83, Glu84, and Tyr135 together coordinate sn-glycerol 3-phosphate. Glycerol contacts are provided by Arg83, Glu84, and Tyr135. Residue His231 is modified to Phosphohistidine; by HPr. Asp245 lines the sn-glycerol 3-phosphate pocket. Positions 245 and 246 each coordinate glycerol. The ADP site is built by Thr267 and Gly310. 4 residues coordinate ATP: Thr267, Gly310, Gln314, and Gly411. Positions 411 and 415 each coordinate ADP.

It belongs to the FGGY kinase family. Homotetramer and homodimer (in equilibrium). The phosphoenolpyruvate-dependent sugar phosphotransferase system (PTS), including enzyme I, and histidine-containing protein (HPr) are required for the phosphorylation, which leads to the activation of the enzyme.

It carries out the reaction glycerol + ATP = sn-glycerol 3-phosphate + ADP + H(+). The protein operates within polyol metabolism; glycerol degradation via glycerol kinase pathway; sn-glycerol 3-phosphate from glycerol: step 1/1. Its activity is regulated as follows. Activated by phosphorylation and inhibited by fructose 1,6-bisphosphate (FBP). In terms of biological role, key enzyme in the regulation of glycerol uptake and metabolism. Catalyzes the phosphorylation of glycerol to yield sn-glycerol 3-phosphate. The protein is Glycerol kinase 1 of Lactiplantibacillus plantarum (strain ATCC BAA-793 / NCIMB 8826 / WCFS1) (Lactobacillus plantarum).